The primary structure comprises 453 residues: UDP-N-acetylmuramate--L-alanyl-gamma-D-glutamyl-meso-2,6-diaminoheptandioate ligase (453 aa).

111–117 serves as a coordination point for ATP; it reads GTHGKTT.

Belongs to the MurCDEF family. Mpl subfamily. The cofactor is Mg(2+).

It catalyses the reaction UDP-N-acetyl-alpha-D-muramate + L-alanyl-gamma-D-glutamyl-meso-2,6-diaminopimelate + ATP = UDP-N-acetyl-alpha-D-muramoyl-L-alanyl-gamma-D-glutamyl-meso-2,6-diaminopimelate + ADP + phosphate + H(+). Its pathway is cell wall biogenesis; peptidoglycan recycling. Reutilizes the intact tripeptide L-alanyl-gamma-D-glutamyl-meso-diaminopimelate by linking it to UDP-N-acetylmuramate. The sequence is that of UDP-N-acetylmuramate--L-alanyl-gamma-D-glutamyl-meso-2,6-diaminoheptandioate ligase from Haemophilus influenzae (strain ATCC 51907 / DSM 11121 / KW20 / Rd).